The primary structure comprises 267 residues: Hydroxyacylglutathione hydrolase (267 aa).

Residues H55, H57, D59, H60, H121, D138, and H176 each contribute to the Zn(2+) site.

The protein belongs to the metallo-beta-lactamase superfamily. Glyoxalase II family. As to quaternary structure, monomer. Zn(2+) serves as cofactor.

The catalysed reaction is an S-(2-hydroxyacyl)glutathione + H2O = a 2-hydroxy carboxylate + glutathione + H(+). It participates in secondary metabolite metabolism; methylglyoxal degradation; (R)-lactate from methylglyoxal: step 2/2. Functionally, thiolesterase that catalyzes the hydrolysis of S-D-lactoyl-glutathione to form glutathione and D-lactic acid. This Shewanella oneidensis (strain ATCC 700550 / JCM 31522 / CIP 106686 / LMG 19005 / NCIMB 14063 / MR-1) protein is Hydroxyacylglutathione hydrolase.